The sequence spans 620 residues: Sodium-dependent dopamine transporter (620 aa).

Residues 1–56 (MSKSKCSVGLMSSVVAPAKEPNAVGPKEVELILVKEQNGVQLTSSTLTNPRQSPVE) lie on the Cytoplasmic side of the membrane. Residues 57–95 (AQDRETWGKKIDFLLSVIGFAVDLANVWRFPYLCYKNGG) traverse the membrane as a discontinuously helical segment. Residues Gly-75, Ala-77, Val-78, Asp-79, and Asn-82 each contribute to the Na(+) site. Residue Asp-79 coordinates dopamine. Helical transmembrane passes span 96 to 127 (GAFL…NREG) and 128 to 171 (AAGV…FSSF). Dopamine is bound by residues Ser-149 and Gly-153. Residues 172–236 (TTELPWIHCN…SHGIDDLGPP (65 aa)) are Extracellular-facing. A disulfide bond links Cys-180 and Cys-189. N-linked (GlcNAc...) asparagine glycans are attached at residues Asn-181, Asn-188, and Asn-205. 2 consecutive transmembrane segments (helical) span residues 237–256 (RWQL…FSLW) and 257–287 (KGVK…GVTL). At 288-306 (PGAIDGIRAYLSVDFYRLC) the chain is on the extracellular side. A discontinuously helical membrane pass occupies residues 307 to 335 (EASVWIDAATQVCFSLGVGFGVLIAFSSY). Gln-317 is a chloride binding site. Phe-320 lines the dopamine pocket. Positions 321 and 353 each coordinate Na(+). Position 321 (Ser-321) interacts with chloride. A helical membrane pass occupies residues 336–376 (NKFTNNCYRDAIVTTSINSLTSFSSGFVVFSFLGYMAQKHS). Position 357 (Ser-357) interacts with chloride. At 377-400 (VPIGDVAKDGPGLIFIIYPEAIAT) the chain is on the extracellular side. The next 3 membrane-spanning stretches (helical) occupy residues 401–442 (LPLS…QLLH), 443–466 (RHRE…CVTN), and 467–499 (GGIY…AWFY). Na(+) is bound by residues Leu-418, Asp-421, and Ser-422. Dopamine contacts are provided by Ser-422 and Ala-423. The Cytoplasmic portion of the chain corresponds to 500-516 (GVGQFSDDIQQMTGQRP). A helical transmembrane segment spans residues 517–542 (SLYWRLCWKLVSPCFLLFVVVVSIVT). Over 543-553 (FRPPHYGAYIF) the chain is Extracellular. A helical membrane pass occupies residues 554 to 583 (PDWANALGWVIATSSMAMVPIYAAYKFCSL). Positions 561 to 590 (GWVIATSSMAMVPIYAAYKFCSLPGSFREK) are interaction with TGFB1I1. Residues 584–620 (PGSFREKLAYAIAPEKDRELVDRGEVRQFTLRHWLKV) are Cytoplasmic-facing.

Belongs to the sodium:neurotransmitter symporter (SNF) (TC 2.A.22) family. SLC6A3 subfamily. In terms of assembly, monomer. Homooligomer; disulfide-linked. Interacts with PRKCABP and TGFB1I1. Interacts (via N-terminus) with SYNGR3 (via N-terminus). Interacts with SLC18A2. Interacts with TOR1A (ATP-bound); TOR1A regulates SLC6A3 subcellular location. Interacts with alpha-synuclein/SNCA. Interacts with SEPTIN4. As to expression, highly expressed in substantia nigra. Expressed in axonal varicosities in dopaminergic nerve terminals (at protein level). Expressed in the striatum (at protein level).

It is found in the cell membrane. The protein resides in the cell projection. It localises to the neuron projection. The protein localises to the axon. The enzyme catalyses dopamine(out) + chloride(out) + Na(+)(out) = dopamine(in) + chloride(in) + Na(+)(in). It carries out the reaction dopamine(out) + chloride(out) + 2 Na(+)(out) = dopamine(in) + chloride(in) + 2 Na(+)(in). It catalyses the reaction (R)-noradrenaline(out) + chloride(out) + Na(+)(out) = (R)-noradrenaline(in) + chloride(in) + Na(+)(in). Inhibited by cocaine, which occupies the same binding site as dopamine. Inhibited by zinc ions. Enhanced by the antibiotic valinomycin. Inhibited by benztropine. Inhibited by GBR 12909 dihydrochloride and amphetamine. Inhibited by mazindol, GBR 12783 dihydrochloride, nomifensine, diclofensine, amfonelic acid, Lu 19005, Win-35428, bupropion and ritalin. Mediates sodium- and chloride-dependent transport of dopamine. Also mediates sodium- and chloride-dependent transport of norepinephrine (also known as noradrenaline). Regulator of light-dependent retinal hyaloid vessel regression, downstream of OPN5 signaling. In Homo sapiens (Human), this protein is Sodium-dependent dopamine transporter (SLC6A3).